Reading from the N-terminus, the 196-residue chain is DnaA initiator-associating protein DiaA (196 aa).

In terms of domain architecture, SIS spans 34 to 196 (LVHSLLNGNK…DNTLFPHQDD (163 aa)).

It belongs to the SIS family. DiaA subfamily. In terms of assembly, homotetramer; dimer of dimers.

Its function is as follows. Required for the timely initiation of chromosomal replication via direct interactions with the DnaA initiator protein. The chain is DnaA initiator-associating protein DiaA from Citrobacter koseri (strain ATCC BAA-895 / CDC 4225-83 / SGSC4696).